Consider the following 330-residue polypeptide: Small ribosomal subunit protein mS35 (330 aa).

Positions 50–73 are disordered; the sequence is AAGKGVRGQMKPRRQAGEPRTERM. The segment covering 64–73 has biased composition (basic and acidic residues); sequence QAGEPRTERM.

It belongs to the mitochondrion-specific ribosomal protein mS35 family. As to quaternary structure, component of the mitochondrial ribosome small subunit (28S) which comprises a 12S rRNA and about 30 distinct proteins.

It localises to the mitochondrion. The sequence is that of Small ribosomal subunit protein mS35 (mrps35) from Danio rerio (Zebrafish).